Reading from the N-terminus, the 183-residue chain is Dual-action ribosomal maturation protein DarP (183 aa).

This sequence belongs to the DarP family.

It is found in the cytoplasm. Its function is as follows. Member of a network of 50S ribosomal subunit biogenesis factors which assembles along the 30S-50S interface, preventing incorrect 23S rRNA structures from forming. Promotes peptidyl transferase center (PTC) maturation. In Escherichia coli O81 (strain ED1a), this protein is Dual-action ribosomal maturation protein DarP.